We begin with the raw amino-acid sequence, 104 residues long: Large ribosomal subunit protein bL21 (104 aa).

This sequence belongs to the bacterial ribosomal protein bL21 family. Part of the 50S ribosomal subunit. Contacts protein L20.

In terms of biological role, this protein binds to 23S rRNA in the presence of protein L20. The polypeptide is Large ribosomal subunit protein bL21 (Pseudomonas entomophila (strain L48)).